Consider the following 425-residue polypeptide: MTKALDGVRILDFTHVQSGPTCTQLLAWFGADVIKVERPGVGDITRGQLQDLPNVDSLYFTMLNHNKRSITLDTKNPKGKEVLTELIKTCDVLVENFGPGVLDRMGFPWEKIQSINPKMIVASIKGFGPGPYEDCKVYENVAQCTGGAASTTGFRDGPPLVTGAQIGDSGTGLHLALGIVTALYQRTTTGRGQRVTAAMQDGVLNLTRVKLRDQQRLAHGPLKEFSQFGEGIPFGEAVPRAGNDSGGGQPGRILKCKGWQTDPNAYIYFITQAPVWEKICDVINEPDWKTHAEYAKPAARLKHLNSIFARIEEWTMTKTKFEAMDILNEYDIPCGPILSMKELAEDPSLRATGTVVEVEHPTRGKYLSVGNPIKLSDSPTDVQRSPLLGEHTDEILRQVLGFSDHQVAEIHDSGALDPPRKAAAE.

CoA is bound by residues 17–18 (QS), Arg38, 72–75 (LDTK), 96–98 (NFG), Arg104, and 136–139 (KVYE). The active-site Nucleophile is the Asp168. 247 to 249 (GGQ) provides a ligand contact to substrate.

This sequence belongs to the CoA-transferase III family. Frc subfamily. As to quaternary structure, homodimer.

The enzyme catalyses formyl-CoA + oxalate = oxalyl-CoA + formate. It participates in metabolic intermediate degradation; oxalate degradation; CO(2) and formate from oxalate: step 1/2. Its function is as follows. Involved in the catabolism of oxalate and in the adapatation to low pH via the induction of the oxalate-dependent acid tolerance response (ATR). Catalyzes the transfer of the CoA moiety from formyl-CoA to oxalate. The protein is Formyl-CoA:oxalate CoA-transferase of Rhodopseudomonas palustris (strain BisA53).